The following is a 152-amino-acid chain: Adrenodoxin-like protein 2, mitochondrial (152 aa).

Residues methionine 1 to phenylalanine 29 constitute a mitochondrion transit peptide. In terms of domain architecture, 2Fe-2S ferredoxin-type spans valine 41–isoleucine 146. [2Fe-2S] cluster is bound by residues cysteine 80, cysteine 86, cysteine 89, and cysteine 127.

It belongs to the adrenodoxin/putidaredoxin family. Requires [2Fe-2S] cluster as cofactor.

The protein resides in the mitochondrion. Its function is as follows. Required for ecdysteroidogenesis in the prothoracic gland which is necessary for larval to pupal transition. This is Adrenodoxin-like protein 2, mitochondrial from Drosophila melanogaster (Fruit fly).